We begin with the raw amino-acid sequence, 1642 residues long: DNA-directed RNA polymerase I subunit RPA1 (1642 aa).

The Zn(2+) site is built by cysteine 66, cysteine 69, cysteine 75, and histidine 78. Mg(2+) is bound by residues aspartate 565, aspartate 567, and aspartate 569. Residues 939–951 (PQDFFFHCMAGRE) form a bridging helix region. A disordered region spans residues 1337–1428 (DADKDDDNDL…GNDNDGDDKA (92 aa)). A compositionally biased stretch (acidic residues) spans 1340–1350 (KDDDNDLDNGD). Basic and acidic residues predominate over residues 1351 to 1361 (EVGRSKAKAND). Acidic residues-rich tracts occupy residues 1362–1373 (DDSSDDNDDDDA) and 1386–1424 (KDYDDPDDVEELHDANDDDDEAEDEDDEEKGQDGNDNDG). Residues serine 1364 and serine 1365 each carry the phosphoserine modification.

Belongs to the RNA polymerase beta' chain family. As to quaternary structure, component of the RNA polymerase I (Pol I) complex consisting of at least 13 subunits. Phosphorylated.

Its subcellular location is the nucleus. It localises to the nucleolus. The catalysed reaction is RNA(n) + a ribonucleoside 5'-triphosphate = RNA(n+1) + diphosphate. Its function is as follows. DNA-dependent RNA polymerase catalyzes the transcription of DNA into RNA using the four ribonucleoside triphosphates as substrates. Largest and catalytic core component of RNA polymerase I which synthesizes ribosomal RNA precursors. Forms the polymerase active center together with the second largest subunit. A single stranded DNA template strand of the promoter is positioned within the central active site cleft of Pol I. A bridging helix emanates from RPA1 and crosses the cleft near the catalytic site and is thought to promote translocation of Pol I by acting as a ratchet that moves the RNA-DNA hybrid through the active site by switching from straight to bent conformations at each step of nucleotide addition. The polypeptide is DNA-directed RNA polymerase I subunit RPA1 (RpI1) (Drosophila melanogaster (Fruit fly)).